Here is a 278-residue protein sequence, read N- to C-terminus: NH(3)-dependent NAD(+) synthetase (278 aa).

39–46 (GVSGGVDS) is an ATP binding site. Asp-45 provides a ligand contact to Mg(2+). Arg-121 is a deamido-NAD(+) binding site. Thr-141 lines the ATP pocket. Glu-146 is a binding site for Mg(2+). 2 residues coordinate deamido-NAD(+): Lys-154 and Asp-161. Residues Lys-170 and Ser-192 each coordinate ATP. 252 to 253 (HK) contributes to the deamido-NAD(+) binding site.

The protein belongs to the NAD synthetase family. In terms of assembly, homodimer.

It catalyses the reaction deamido-NAD(+) + NH4(+) + ATP = AMP + diphosphate + NAD(+) + H(+). The protein operates within cofactor biosynthesis; NAD(+) biosynthesis; NAD(+) from deamido-NAD(+) (ammonia route): step 1/1. Functionally, catalyzes the ATP-dependent amidation of deamido-NAD to form NAD. Uses ammonia as a nitrogen source. This Saccharolobus solfataricus (strain ATCC 35092 / DSM 1617 / JCM 11322 / P2) (Sulfolobus solfataricus) protein is NH(3)-dependent NAD(+) synthetase.